The primary structure comprises 250 residues: Pimeloyl-[acyl-carrier protein] methyl ester esterase (250 aa).

Residues W12, 71 to 72 (SL), and 138 to 142 (FVALQ) each bind substrate. The Nucleophile role is filled by S71. Catalysis depends on residues D202 and H230. H230 is a substrate binding site.

This sequence belongs to the AB hydrolase superfamily. Carboxylesterase BioH family. In terms of assembly, monomer.

Its subcellular location is the cytoplasm. The enzyme catalyses 6-carboxyhexanoyl-[ACP] methyl ester + H2O = 6-carboxyhexanoyl-[ACP] + methanol + H(+). Its pathway is cofactor biosynthesis; biotin biosynthesis. Functionally, the physiological role of BioH is to remove the methyl group introduced by BioC when the pimeloyl moiety is complete. It allows to synthesize pimeloyl-ACP via the fatty acid synthetic pathway through the hydrolysis of the ester bonds of pimeloyl-ACP esters. The chain is Pimeloyl-[acyl-carrier protein] methyl ester esterase from Aromatoleum aromaticum (strain DSM 19018 / LMG 30748 / EbN1) (Azoarcus sp. (strain EbN1)).